The chain runs to 423 residues: Serine--tRNA ligase (423 aa).

Position 231 to 233 (231 to 233 (TGE)) interacts with L-serine. Residue 262-264 (RSE) participates in ATP binding. L-serine is bound at residue Glu-285. 349–352 (EISS) is a binding site for ATP. Position 385 (Ser-385) interacts with L-serine.

Belongs to the class-II aminoacyl-tRNA synthetase family. Type-1 seryl-tRNA synthetase subfamily. As to quaternary structure, homodimer. The tRNA molecule binds across the dimer.

The protein localises to the cytoplasm. The enzyme catalyses tRNA(Ser) + L-serine + ATP = L-seryl-tRNA(Ser) + AMP + diphosphate + H(+). The catalysed reaction is tRNA(Sec) + L-serine + ATP = L-seryl-tRNA(Sec) + AMP + diphosphate + H(+). Its pathway is aminoacyl-tRNA biosynthesis; selenocysteinyl-tRNA(Sec) biosynthesis; L-seryl-tRNA(Sec) from L-serine and tRNA(Sec): step 1/1. Its function is as follows. Catalyzes the attachment of serine to tRNA(Ser). Is also able to aminoacylate tRNA(Sec) with serine, to form the misacylated tRNA L-seryl-tRNA(Sec), which will be further converted into selenocysteinyl-tRNA(Sec). This is Serine--tRNA ligase from Coxiella burnetii (strain RSA 331 / Henzerling II).